We begin with the raw amino-acid sequence, 568 residues long: Periplasmic trehalase (568 aa).

A signal peptide spans 1–38 (MPHAPARSGDAMSAAAPPCCTSLLGLSLSMFVAPCALA). Substrate-binding positions include Arg169, 176 to 177 (WD), Asn213, 222 to 224 (RSQ), 294 to 296 (RPE), and Gly327. Catalysis depends on proton donor/acceptor residues Asp329 and Glu511. Residue Glu526 coordinates substrate.

Belongs to the glycosyl hydrolase 37 family.

Its subcellular location is the periplasm. The enzyme catalyses alpha,alpha-trehalose + H2O = alpha-D-glucose + beta-D-glucose. Functionally, provides the cells with the ability to utilize trehalose at high osmolarity by splitting it into glucose molecules that can subsequently be taken up by the phosphotransferase-mediated uptake system. This Xanthomonas campestris pv. campestris (strain 8004) protein is Periplasmic trehalase.